Reading from the N-terminus, the 685-residue chain is Amino acid transporter heavy chain SLC3A1 (685 aa).

Over residues 1–11 the composition is skewed to basic and acidic residues; sequence MAEDKSKRDSI. Residues 1–56 form a disordered region; it reads MAEDKSKRDSIEMSMKGCQTNNGFVHNEDILEQTPDPGSSTDNLKHSTRGILGSQE. At 1 to 87 the chain is on the cytoplasmic side; sequence MAEDKSKRDS…GQARYRIPRE (87 aa). The residue at position 10 (S10) is a Phosphoserine. Residues 88–108 form a helical; Signal-anchor for type II membrane protein membrane-spanning segment; the sequence is ILFWLTVASVLVLIAATIAII. The Extracellular portion of the chain corresponds to 109–685; it reads ALSPKCLDWW…SVLNILYTSC (577 aa). Residue N214 coordinates Ca(2+). N-linked (GlcNAc...) asparagine glycans are attached at residues N214 and N261. C242 and C273 form a disulfide bridge. 4 residues coordinate Ca(2+): D284, F318, L319, and E321. N-linked (GlcNAc...) asparagine glycans are attached at residues N332, N495, N513, and N575. Disulfide bonds link C571–C666 and C673–C685.

As to quaternary structure, disulfide-linked heterodimer composed of the catalytic light subunit SLC7A9 and the heavy subunit SLC3A1. The heterodimer is the minimal functional unit. Assembles in non-covalently linked heterotetramers (dimers of heterodimers) and higher order oligomers; the oligomerization is mediated by SLC3A1 likely to prevent degradation in the endoplasmic reticulum and facilitate heteromer trafficking to the plasma membrane. Disulfide-linked heterodimer composed of the catalytic light subunit SLC7A13 and the heavy subunit SLC3A1. As to expression, expressed in the brush border membrane in the kidney (at protein level). Predominantly expressed in the kidney, small intestine and pancreas. Weakly expressed in liver.

The protein resides in the cell membrane. It is found in the apical cell membrane. Its function is as follows. Acts as a chaperone that facilitates biogenesis and trafficking of functional transporter heteromers to the plasma membrane. Associates with SLC7A9 to form a functional transporter complex that mediates the electrogenic exchange between cationic amino acids and neutral amino acids, with a stoichiometry of 1:1. SLC7A9-SLC3A1 transporter has system b(0,+)-like activity with high affinity for extracellular cationic amino acids and L-cystine and lower affinity for intracellular neutral amino acids. Substrate exchange is driven by high concentration of intracellular neutral amino acids and the intracellular reduction of L-cystine to L-cysteine. SLC7A9-SLC3A1 acts as a major transporter for reabsorption of L-cystine and dibasic amino acids across the brush border membrane in early proximal tubules. Associates with SLC7A13 to form a functional complex that transports anionic and neutral amino acids via exchange or facilitated diffusion. SLC7A13-SLC3A1 may act as a major transporter for L-cystine in late proximal tubules, ensuring its reabsorption from the luminal fluid in exchange for cytosolic L-glutamate or L-aspartate. This chain is Amino acid transporter heavy chain SLC3A1, found in Homo sapiens (Human).